Reading from the N-terminus, the 562-residue chain is NAD-dependent malic enzyme (562 aa).

Tyr-101 functions as the Proton donor in the catalytic mechanism. Arg-154 serves as a coordination point for NAD(+). Residue Lys-172 is the Proton acceptor of the active site. A divalent metal cation is bound by residues Glu-243, Asp-244, and Asp-267. Residues Asp-267 and Asn-415 each coordinate NAD(+).

Belongs to the malic enzymes family. In terms of assembly, homotetramer. Mg(2+) is required as a cofactor. It depends on Mn(2+) as a cofactor.

It carries out the reaction (S)-malate + NAD(+) = pyruvate + CO2 + NADH. It catalyses the reaction oxaloacetate + H(+) = pyruvate + CO2. This chain is NAD-dependent malic enzyme, found in Shewanella putrefaciens (strain CN-32 / ATCC BAA-453).